We begin with the raw amino-acid sequence, 89 residues long: Small ribosomal subunit protein uS15 (89 aa).

It belongs to the universal ribosomal protein uS15 family. As to quaternary structure, part of the 30S ribosomal subunit. Forms a bridge to the 50S subunit in the 70S ribosome, contacting the 23S rRNA.

Its function is as follows. One of the primary rRNA binding proteins, it binds directly to 16S rRNA where it helps nucleate assembly of the platform of the 30S subunit by binding and bridging several RNA helices of the 16S rRNA. In terms of biological role, forms an intersubunit bridge (bridge B4) with the 23S rRNA of the 50S subunit in the ribosome. The polypeptide is Small ribosomal subunit protein uS15 (Pasteurella multocida (strain Pm70)).